The chain runs to 58 residues: Cecropin-B (58 aa).

Positions 1-21 are cleaved as a signal peptide; it reads ILSFVFACLLALSAVSAAPEP.

This sequence belongs to the cecropin family.

The protein resides in the secreted. Functionally, cecropins have lytic and antibacterial activity against several Gram-positive and Gram-negative bacteria. The polypeptide is Cecropin-B (CECB) (Spodoptera litura (Asian cotton leafworm)).